A 232-amino-acid polypeptide reads, in one-letter code: Ribose-5-phosphate isomerase A (232 aa).

Substrate is bound by residues 29–32 (TGST), 84–87 (DGAD), and 97–100 (KGGG). Glu106 functions as the Proton acceptor in the catalytic mechanism. Residue Lys124 coordinates substrate.

This sequence belongs to the ribose 5-phosphate isomerase family. As to quaternary structure, homodimer.

It catalyses the reaction aldehydo-D-ribose 5-phosphate = D-ribulose 5-phosphate. It participates in carbohydrate degradation; pentose phosphate pathway; D-ribose 5-phosphate from D-ribulose 5-phosphate (non-oxidative stage): step 1/1. Catalyzes the reversible conversion of ribose-5-phosphate to ribulose 5-phosphate. This is Ribose-5-phosphate isomerase A from Brucella suis biovar 1 (strain 1330).